Reading from the N-terminus, the 386-residue chain is Succinyl-diaminopimelate desuccinylase (386 aa).

His73 serves as a coordination point for Zn(2+). Asp75 is an active-site residue. Residue Asp106 coordinates Zn(2+). The Proton acceptor role is filled by Glu140. Residues Glu141, Glu169, and His355 each coordinate Zn(2+).

This sequence belongs to the peptidase M20A family. DapE subfamily. Homodimer. Zn(2+) is required as a cofactor. Requires Co(2+) as cofactor.

The catalysed reaction is N-succinyl-(2S,6S)-2,6-diaminopimelate + H2O = (2S,6S)-2,6-diaminopimelate + succinate. The protein operates within amino-acid biosynthesis; L-lysine biosynthesis via DAP pathway; LL-2,6-diaminopimelate from (S)-tetrahydrodipicolinate (succinylase route): step 3/3. Its function is as follows. Catalyzes the hydrolysis of N-succinyl-L,L-diaminopimelic acid (SDAP), forming succinate and LL-2,6-diaminopimelate (DAP), an intermediate involved in the bacterial biosynthesis of lysine and meso-diaminopimelic acid, an essential component of bacterial cell walls. The polypeptide is Succinyl-diaminopimelate desuccinylase (Delftia acidovorans (strain DSM 14801 / SPH-1)).